Consider the following 201-residue polypeptide: Ribonuclease HII (201 aa).

One can recognise an RNase H type-2 domain in the interval 10 to 200 (LIEAGCDEAG…LGTDPQLEIP (191 aa)). A divalent metal cation is bound by residues Asp16, Glu17, and Asp108.

Belongs to the RNase HII family. Requires Mn(2+) as cofactor. It depends on Mg(2+) as a cofactor.

It localises to the cytoplasm. The catalysed reaction is Endonucleolytic cleavage to 5'-phosphomonoester.. Its function is as follows. Endonuclease that specifically degrades the RNA of RNA-DNA hybrids. This is Ribonuclease HII from Phocaeicola vulgatus (strain ATCC 8482 / DSM 1447 / JCM 5826 / CCUG 4940 / NBRC 14291 / NCTC 11154) (Bacteroides vulgatus).